The primary structure comprises 426 residues: Histone-binding protein RBBP7 (426 aa).

Ala-2 is subject to N-acetylalanine. A Phosphoserine modification is found at Ser-3. An N6-acetyllysine; alternate modification is found at Lys-4. Lys-4 is covalently cross-linked (Glycyl lysine isopeptide (Lys-Gly) (interchain with G-Cter in SUMO2); alternate). Residue Lys-4 forms a Glycyl lysine isopeptide (Lys-Gly) (interchain with G-Cter in ubiquitin); alternate linkage. Thr-10 carries the post-translational modification Phosphothreonine. WD repeat units follow at residues 47-122 (QWLP…KINH), 128-173 (RARY…LRLR), 181-217 (GLSWNSNLSGHLLSASDDHTVCLWDINAGPKEGKIVD), 228-269 (VVED…HLVD), 275-312 (VNCLSFNPYSEFILATGSADKTVALWDLRNLKLKLHTF), 318-370 (EIFQ…LFIH), and 377-404 (ISDFSWNPNEPWVICSVSEDNIMQIWQM). Position 95 is a phosphoserine (Ser-95). Lys-101 participates in a covalent cross-link: Glycyl lysine isopeptide (Lys-Gly) (interchain with G-Cter in SUMO2). Lys-119 is subject to N6-acetyllysine. Lys-155 participates in a covalent cross-link: Glycyl lysine isopeptide (Lys-Gly) (interchain with G-Cter in SUMO2). Lys-159 bears the N6-acetyllysine; alternate mark. Lys-159 participates in a covalent cross-link: Glycyl lysine isopeptide (Lys-Gly) (interchain with G-Cter in SUMO2); alternate. Phosphoserine is present on Ser-355.

This sequence belongs to the WD repeat RBAP46/RBAP48/MSI1 family. Binds directly to helix 1 of the histone fold of histone H4, a region that is not accessible when H4 is in chromatin. Subunit of the type B histone acetyltransferase (HAT) complex, composed of RBBP7 and HAT1. Subunit of the core histone deacetylase (HDAC) complex, which is composed of HDAC1, HDAC2, RBBP4 and RBBP7. The core HDAC complex associates with SIN3A, ARID4B/SAP180, SAP18, SAP30, SAP130, SUDS3/SAP45 and possibly ARID4A/RBP1 and ING1 to form the SIN3 HDAC complex. Component of the nucleosome remodeling and deacetylase (NuRD) repressor complex, composed of core proteins MTA1, MTA2, MTA3, RBBP4, RBBP7, HDAC1, HDAC2, MBD2, MBD3, and peripherally associated proteins CDK2AP1, CDK2AP2, GATAD2A, GATAD2B, CHD3, CHD4 and CHD5. The exact stoichiometry of the NuRD complex is unknown, and some subunits such as MBD2 and MBD3, GATAD2A and GATAD2B, and CHD3, CHD4 and CHD5 define mutually exclusive NuRD complexes. The NuRD complex may interact with MBD3L1. The NuRD complex may interact with MBD3L2. Subunit of the PRC2/EED-EZH2 complex, which is composed of at least EED, EZH2, RBBP4, RBBP7 and SUZ12. The PRC2/EED-EZH2 complex may also associate with HDAC1. Component of the NURF-1 ISWI chromatin remodeling complex (also called the nucleosome-remodeling factor (NURF) complex) at least composed of SMARCA1, BPTF, RBBP4 and RBBP7. Within the complex interacts with SMARCA1. Component of the BPFT-SMARCA1 complex at least composed of SMARCA1, BPFT, RBBP4 and RBBP7; the complex is catalytically inactive and does not remodel chromatin. Within the complex interacts with SMARCA1. Interacts with BRCA1. Interacts with CDK2AP1. Interacts with CENPA. Interacts with CHD3. Interacts with CHD4. Interacts with CREBBP, and this interaction may be enhanced by the binding of phosphorylated CREB1 to CREBBP. Interacts with HDAC7. Interacts with MTA1. Interacts with PWWP2B. Interacts with RB1 (via viral protein-binding domain). Interacts with SUV39H1.

The protein localises to the nucleus. In terms of biological role, core histone-binding subunit that may target chromatin remodeling factors, histone acetyltransferases and histone deacetylases to their histone substrates in a manner that is regulated by nucleosomal DNA. Component of several complexes which regulate chromatin metabolism. These include the type B histone acetyltransferase (HAT) complex, which is required for chromatin assembly following DNA replication; the core histone deacetylase (HDAC) complex, which promotes histone deacetylation and consequent transcriptional repression; the nucleosome remodeling and histone deacetylase complex (the NuRD complex), which promotes transcriptional repression by histone deacetylation and nucleosome remodeling; and the PRC2/EED-EZH2 complex, which promotes repression of homeotic genes during development; and the NURF (nucleosome remodeling factor) complex. The protein is Histone-binding protein RBBP7 (RBBP7) of Pongo abelii (Sumatran orangutan).